The following is a 192-amino-acid chain: Pupal cuticle protein (192 aa).

The N-terminal stretch at M1 to Q15 is a signal peptide. Positions D45–P106 constitute a Chitin-binding type R&amp;R domain. Residues Q149 to K163 show a composition bias toward polar residues. The tract at residues Q149–R192 is disordered.

Its function is as follows. Component of the cuticle of the pupa of fruit fly. This chain is Pupal cuticle protein (Pcp), found in Drosophila pseudoobscura pseudoobscura (Fruit fly).